Consider the following 556-residue polypeptide: Potassium-transporting ATPase potassium-binding subunit (556 aa).

Transmembrane regions (helical) follow at residues 6 to 26 (AGLIFLAVLVAALVVVHVPLG), 65 to 85 (GVLAFSSVSIIFLFVLQLVQG), 133 to 153 (GLAVQNFVSAAVGMAVAVALV), 176 to 196 (LRILLPISIVGAVLLVAGGAI), 249 to 269 (PTAWTNWLEIFLILVIGFSLP), 283 to 303 (YAIASVMASLYLLSTGFMLWF), 378 to 398 (GLYGMLVLAVITVFVAGLMVG), 419 to 439 (YFLVTPLIVLTGTAIAMALPG), 483 to 503 (ALGLAMAFGRFLPIVLVLALA), and 526 to 546 (FVGMVAGVTLIVVALTFLPML).

The protein belongs to the KdpA family. The system is composed of three essential subunits: KdpA, KdpB and KdpC.

Its subcellular location is the cell membrane. In terms of biological role, part of the high-affinity ATP-driven potassium transport (or Kdp) system, which catalyzes the hydrolysis of ATP coupled with the electrogenic transport of potassium into the cytoplasm. This subunit binds the extracellular potassium ions and delivers the ions to the membrane domain of KdpB through an intramembrane tunnel. This is Potassium-transporting ATPase potassium-binding subunit from Mycobacterium avium (strain 104).